The sequence spans 64 residues: uncharacterized protein (64 aa).

Residues 15 to 37 (VVVPRFVRFIVYVVLFTVAVQRV) form a helical membrane-spanning segment.

This sequence belongs to the HHV-5 US34A protein family.

The protein resides in the host membrane. This is an uncharacterized protein from Homo sapiens (Human).